A 77-amino-acid polypeptide reads, in one-letter code: Large ribosomal subunit protein bL28 (77 aa).

Belongs to the bacterial ribosomal protein bL28 family.

This is Large ribosomal subunit protein bL28 from Paracidovorax citrulli (strain AAC00-1) (Acidovorax citrulli).